We begin with the raw amino-acid sequence, 426 residues long: Serine--tRNA ligase (426 aa).

The span at 1 to 15 (MIDVKDLSENPDKFR) shows a compositional bias: basic and acidic residues. Residues 1–20 (MIDVKDLSENPDKFRASQRA) form a disordered region. 228–230 (TSE) is a binding site for L-serine. Residues 259 to 261 (RRE) and Val-275 each bind ATP. Position 282 (Glu-282) interacts with L-serine. 346–349 (ELTS) is a binding site for ATP. Thr-386 contacts L-serine.

The protein belongs to the class-II aminoacyl-tRNA synthetase family. Type-1 seryl-tRNA synthetase subfamily. Homodimer. The tRNA molecule binds across the dimer.

Its subcellular location is the cytoplasm. It catalyses the reaction tRNA(Ser) + L-serine + ATP = L-seryl-tRNA(Ser) + AMP + diphosphate + H(+). The catalysed reaction is tRNA(Sec) + L-serine + ATP = L-seryl-tRNA(Sec) + AMP + diphosphate + H(+). Its pathway is aminoacyl-tRNA biosynthesis; selenocysteinyl-tRNA(Sec) biosynthesis; L-seryl-tRNA(Sec) from L-serine and tRNA(Sec): step 1/1. Functionally, catalyzes the attachment of serine to tRNA(Ser). Is also able to aminoacylate tRNA(Sec) with serine, to form the misacylated tRNA L-seryl-tRNA(Sec), which will be further converted into selenocysteinyl-tRNA(Sec). In Paenarthrobacter aurescens (strain TC1), this protein is Serine--tRNA ligase.